We begin with the raw amino-acid sequence, 301 residues long: Homoserine kinase (301 aa).

86 to 96 contributes to the ATP binding site; that stretch reads PLARGLGSSAT.

This sequence belongs to the GHMP kinase family. Homoserine kinase subfamily.

The protein localises to the cytoplasm. The enzyme catalyses L-homoserine + ATP = O-phospho-L-homoserine + ADP + H(+). It functions in the pathway amino-acid biosynthesis; L-threonine biosynthesis; L-threonine from L-aspartate: step 4/5. In terms of biological role, catalyzes the ATP-dependent phosphorylation of L-homoserine to L-homoserine phosphate. This chain is Homoserine kinase, found in Thermosynechococcus vestitus (strain NIES-2133 / IAM M-273 / BP-1).